A 401-amino-acid polypeptide reads, in one-letter code: Aspartokinase (401 aa).

The protein belongs to the aspartokinase family.

It catalyses the reaction L-aspartate + ATP = 4-phospho-L-aspartate + ADP. It participates in amino-acid biosynthesis; L-lysine biosynthesis via DAP pathway; (S)-tetrahydrodipicolinate from L-aspartate: step 1/4. The protein operates within amino-acid biosynthesis; L-methionine biosynthesis via de novo pathway; L-homoserine from L-aspartate: step 1/3. Its pathway is amino-acid biosynthesis; L-threonine biosynthesis; L-threonine from L-aspartate: step 1/5. This Rickettsia felis (strain ATCC VR-1525 / URRWXCal2) (Rickettsia azadi) protein is Aspartokinase (lysC).